The sequence spans 368 residues: Chaperone protein DnaJ (368 aa).

One can recognise a J domain in the interval Asp-5 to Gly-70. The CR-type zinc finger occupies Gly-124–His-201. Zn(2+) is bound by residues Cys-137, Cys-140, Cys-153, Cys-156, Cys-175, Cys-178, Cys-189, and Cys-192. CXXCXGXG motif repeat units follow at residues Cys-137–Gly-144, Cys-153–Gly-160, Cys-175–Gly-182, and Cys-189–Gly-196.

Belongs to the DnaJ family. As to quaternary structure, homodimer. Zn(2+) is required as a cofactor.

It is found in the cytoplasm. In terms of biological role, participates actively in the response to hyperosmotic and heat shock by preventing the aggregation of stress-denatured proteins and by disaggregating proteins, also in an autonomous, DnaK-independent fashion. Unfolded proteins bind initially to DnaJ; upon interaction with the DnaJ-bound protein, DnaK hydrolyzes its bound ATP, resulting in the formation of a stable complex. GrpE releases ADP from DnaK; ATP binding to DnaK triggers the release of the substrate protein, thus completing the reaction cycle. Several rounds of ATP-dependent interactions between DnaJ, DnaK and GrpE are required for fully efficient folding. Also involved, together with DnaK and GrpE, in the DNA replication of plasmids through activation of initiation proteins. This Xylella fastidiosa (strain 9a5c) protein is Chaperone protein DnaJ.